The primary structure comprises 339 residues: Phenylalanine--tRNA ligase alpha subunit (339 aa).

A Mg(2+)-binding site is contributed by Glu-254.

This sequence belongs to the class-II aminoacyl-tRNA synthetase family. Phe-tRNA synthetase alpha subunit type 1 subfamily. Tetramer of two alpha and two beta subunits. The cofactor is Mg(2+).

Its subcellular location is the cytoplasm. The catalysed reaction is tRNA(Phe) + L-phenylalanine + ATP = L-phenylalanyl-tRNA(Phe) + AMP + diphosphate + H(+). The polypeptide is Phenylalanine--tRNA ligase alpha subunit (Clostridium beijerinckii (strain ATCC 51743 / NCIMB 8052) (Clostridium acetobutylicum)).